The chain runs to 157 residues: NADPH-dependent 7-cyano-7-deazaguanine reductase (157 aa).

Cysteine 55 serves as the catalytic Thioimide intermediate. Aspartate 62 acts as the Proton donor in catalysis. Substrate-binding positions include 77–79 (VES) and 96–97 (HE).

The protein belongs to the GTP cyclohydrolase I family. QueF type 1 subfamily.

Its subcellular location is the cytoplasm. It carries out the reaction 7-aminomethyl-7-carbaguanine + 2 NADP(+) = 7-cyano-7-deazaguanine + 2 NADPH + 3 H(+). It participates in tRNA modification; tRNA-queuosine biosynthesis. Catalyzes the NADPH-dependent reduction of 7-cyano-7-deazaguanine (preQ0) to 7-aminomethyl-7-deazaguanine (preQ1). The chain is NADPH-dependent 7-cyano-7-deazaguanine reductase from Neisseria meningitidis serogroup B (strain ATCC BAA-335 / MC58).